Here is a 91-residue protein sequence, read N- to C-terminus: DNA-directed RNA polymerase subunit omega (91 aa).

The protein belongs to the RNA polymerase subunit omega family. The RNAP catalytic core consists of 2 alpha, 1 beta, 1 beta' and 1 omega subunit. When a sigma factor is associated with the core the holoenzyme is formed, which can initiate transcription.

It carries out the reaction RNA(n) + a ribonucleoside 5'-triphosphate = RNA(n+1) + diphosphate. Functionally, promotes RNA polymerase assembly. Latches the N- and C-terminal regions of the beta' subunit thereby facilitating its interaction with the beta and alpha subunits. This chain is DNA-directed RNA polymerase subunit omega, found in Actinobacillus pleuropneumoniae serotype 5b (strain L20).